Reading from the N-terminus, the 37-residue chain is Large ribosomal subunit protein bL36c (37 aa).

The protein belongs to the bacterial ribosomal protein bL36 family.

It localises to the plastid. It is found in the chloroplast. This is Large ribosomal subunit protein bL36c from Physcomitrium patens (Spreading-leaved earth moss).